The primary structure comprises 43 residues: Protein PsbN (43 aa).

Residues 5 to 27 (TLVAIPISCLLVSFTGYALYTAF) traverse the membrane as a helical segment.

It belongs to the PsbN family.

The protein localises to the plastid. It localises to the chloroplast thylakoid membrane. Functionally, may play a role in photosystem I and II biogenesis. The chain is Protein PsbN from Sphagnum cuspidatum (Bog moss).